A 183-amino-acid polypeptide reads, in one-letter code: Apo-citrate lyase phosphoribosyl-dephospho-CoA transferase (183 aa).

The protein belongs to the CitX family.

The enzyme catalyses apo-[citrate lyase ACP] + 2'-(5''-triphospho-alpha-D-ribosyl)-3'-dephospho-CoA = holo-[citrate lyase ACP] + diphosphate. In terms of biological role, transfers 2-(5''-triphosphoribosyl)-3'-dephosphocoenzyme-A on a serine residue to the apo-acyl carrier protein (gamma chain) of the citrate lyase to yield holo-acyl carrier protein. This is Apo-citrate lyase phosphoribosyl-dephospho-CoA transferase from Escherichia coli (strain SMS-3-5 / SECEC).